Here is a 438-residue protein sequence, read N- to C-terminus: Histidine--tRNA ligase (438 aa).

The protein belongs to the class-II aminoacyl-tRNA synthetase family. In terms of assembly, homodimer.

It is found in the cytoplasm. It carries out the reaction tRNA(His) + L-histidine + ATP = L-histidyl-tRNA(His) + AMP + diphosphate + H(+). This is Histidine--tRNA ligase (hisS) from Thermobifida fusca (strain YX).